Reading from the N-terminus, the 117-residue chain is MPSLGTMCSLLLFSVLWVDLAMAGSSFLSPEHQKLQQRKESKKPPAKLQPRALEGSLGPEDTSQVEEAEDELEIRFNAPFDVGIKLSGPQYHQHGQALGKFLQEVLWEDTNEALADE.

Positions 1–23 (MPSLGTMCSLLLFSVLWVDLAMA) are cleaved as a signal peptide. The O-decanoyl serine; alternate moiety is linked to residue Ser-26. Ser-26 carries the O-hexanoyl serine; alternate lipid modification. Ser-26 is lipidated: O-octanoyl serine; alternate. A disordered region spans residues 30–68 (PEHQKLQQRKESKKPPAKLQPRALEGSLGPEDTSQVEEA). The span at 31–43 (EHQKLQQRKESKK) shows a compositional bias: basic and acidic residues. A propeptide spans 52–75 (ALEGSLGPEDTSQVEEAEDELEIR) (removed in mature form). The residue at position 98 (Leu-98) is a Leucine amide. A propeptide spans 99 to 117 (GKFLQEVLWEDTNEALADE) (removed in mature form).

Belongs to the motilin family. In terms of processing, O-octanoylated by GOAT/MBOAT4. O-octanoylation is essential for ghrelin activity. Amidation of Leu-98 is essential for obestatin activity.

It localises to the secreted. Functionally, ghrelin is the ligand for growth hormone secretagogue receptor type 1 (GHSR). Induces the release of growth hormone from the pituitary. Has an appetite-stimulating effect, induces adiposity and stimulates gastric acid secretion. Involved in growth regulation. Its function is as follows. Obestatin may be the ligand for GPR39. May have an appetite-reducing effect resulting in decreased food intake. May reduce gastric emptying activity and jejunal motility. The chain is Appetite-regulating hormone (GHRL) from Canis lupus familiaris (Dog).